Here is a 253-residue protein sequence, read N- to C-terminus: Coenzyme F420:L-glutamate ligase (253 aa).

Residues 9–12 (LPEI), 38–39 (ST), and Lys43 each bind GTP. Asp113 contacts a divalent metal cation. Asn116 lines the GTP pocket. Residues Asp148, Thr149, and Glu206 each contribute to the a divalent metal cation site. 204-211 (AGEGDDGT) contacts GTP.

It belongs to the CofE family. In terms of assembly, homodimer. The cofactor is Mg(2+). Mn(2+) is required as a cofactor. K(+) serves as cofactor.

It carries out the reaction oxidized coenzyme F420-0 + GTP + L-glutamate = oxidized coenzyme F420-1 + GDP + phosphate + H(+). It catalyses the reaction oxidized coenzyme F420-1 + GTP + L-glutamate = oxidized coenzyme F420-2 + GDP + phosphate + H(+). It functions in the pathway cofactor biosynthesis; coenzyme F420 biosynthesis. In terms of biological role, catalyzes the GTP-dependent successive addition of two or more gamma-linked L-glutamates to the L-lactyl phosphodiester of 7,8-didemethyl-8-hydroxy-5-deazariboflavin (F420-0) to form coenzyme F420-0-glutamyl-glutamate (F420-2) or polyglutamated F420 derivatives. The polypeptide is Coenzyme F420:L-glutamate ligase (Natronomonas pharaonis (strain ATCC 35678 / DSM 2160 / CIP 103997 / JCM 8858 / NBRC 14720 / NCIMB 2260 / Gabara) (Halobacterium pharaonis)).